Consider the following 289-residue polypeptide: MEIGLREWLIVIGIIVIAGILFDGWRRMRGSKGKLKFRLDRSFSNLPDEEETTSAEVLGPPRVLDTHKEPQLDEHDLPSMSASPREGKRSNSDKRGNSDKKRKDEPQQGDLNLDLDGPSLFTGRDDDFPDDKPAQRITEDKDLPPVEEVLVISVISRSEGGFKGPALLQNILESGLRFGEMDIFHRHESMAGNGEVLFSMANAVKPGVFDLDDIDHFSTRAVSFFLGLPGPRHPKQAFDVMVAAARKLAHELDGELKDDQRSVMTAQTIEHYRQRIVEFERRALTQRRG.

Met-1 is a topological domain (periplasmic). Residues 2–22 traverse the membrane as a helical segment; that stretch reads EIGLREWLIVIGIIVIAGILF. The Cytoplasmic portion of the chain corresponds to 23–289; that stretch reads DGWRRMRGSK…ERRALTQRRG (267 aa). A disordered region spans residues 48–141; the sequence is DEEETTSAEV…KPAQRITEDK (94 aa). Composition is skewed to basic and acidic residues over residues 64–77, 85–106, and 123–141; these read LDTHKEPQLDEHDL, REGKRSNSDKRGNSDKKRKDEP, and GRDDDFPDDKPAQRITEDK.

Belongs to the ZipA family. In terms of assembly, interacts with FtsZ via their C-terminal domains.

The protein localises to the cell inner membrane. In terms of biological role, essential cell division protein that stabilizes the FtsZ protofilaments by cross-linking them and that serves as a cytoplasmic membrane anchor for the Z ring. Also required for the recruitment to the septal ring of downstream cell division proteins. This Pseudomonas savastanoi pv. phaseolicola (strain 1448A / Race 6) (Pseudomonas syringae pv. phaseolicola (strain 1448A / Race 6)) protein is Cell division protein ZipA.